The sequence spans 237 residues: Ribosomal RNA small subunit methyltransferase G (237 aa).

Residues Gly-78, Phe-83, 129-130, and Arg-148 contribute to the S-adenosyl-L-methionine site; that span reads AE.

The protein belongs to the methyltransferase superfamily. RNA methyltransferase RsmG family.

The protein resides in the cytoplasm. Its function is as follows. Specifically methylates the N7 position of a guanine in 16S rRNA. The polypeptide is Ribosomal RNA small subunit methyltransferase G (Streptococcus thermophilus (strain ATCC BAA-491 / LMD-9)).